A 385-amino-acid chain; its full sequence is Homoserine O-succinyltransferase (385 aa).

Residues 51 to 360 enclose the AB hydrolase-1 domain; sequence NAVLICHALS…DSPHGHDAFL (310 aa). Catalysis depends on Ser-157, which acts as the Nucleophile. Arg-227 provides a ligand contact to substrate. Residues Asp-323 and His-356 contribute to the active site. Asp-357 contacts substrate.

Belongs to the AB hydrolase superfamily. MetX family. As to quaternary structure, homodimer.

The protein resides in the cytoplasm. It carries out the reaction L-homoserine + succinyl-CoA = O-succinyl-L-homoserine + CoA. Its pathway is amino-acid biosynthesis; L-methionine biosynthesis via de novo pathway; O-succinyl-L-homoserine from L-homoserine: step 1/1. Transfers a succinyl group from succinyl-CoA to L-homoserine, forming succinyl-L-homoserine. In Hahella chejuensis (strain KCTC 2396), this protein is Homoserine O-succinyltransferase.